Reading from the N-terminus, the 83-residue chain is MAENTQVDVSRLTFERAIEELETIVKRLEDGKVPLEESVTIYERGEALKRRCEELLRQAEARVDKITTDASGQATGTAPLDVQ.

It belongs to the XseB family. As to quaternary structure, heterooligomer composed of large and small subunits.

The protein resides in the cytoplasm. The catalysed reaction is Exonucleolytic cleavage in either 5'- to 3'- or 3'- to 5'-direction to yield nucleoside 5'-phosphates.. Bidirectionally degrades single-stranded DNA into large acid-insoluble oligonucleotides, which are then degraded further into small acid-soluble oligonucleotides. The chain is Exodeoxyribonuclease 7 small subunit from Bradyrhizobium diazoefficiens (strain JCM 10833 / BCRC 13528 / IAM 13628 / NBRC 14792 / USDA 110).